Consider the following 203-residue polypeptide: Outer-membrane lipoprotein LolB (203 aa).

Residues 1 to 17 form the signal peptide; that stretch reads MNRLFRLLPLASLVLTA. C18 carries N-palmitoyl cysteine lipidation. The S-diacylglycerol cysteine moiety is linked to residue C18.

The protein belongs to the LolB family. In terms of assembly, monomer.

It is found in the cell outer membrane. Its function is as follows. Plays a critical role in the incorporation of lipoproteins in the outer membrane after they are released by the LolA protein. The protein is Outer-membrane lipoprotein LolB of Klebsiella pneumoniae subsp. pneumoniae (strain ATCC 700721 / MGH 78578).